The following is a 453-amino-acid chain: Bifunctional protein GlmU (453 aa).

The segment at M1–R226 is pyrophosphorylase. Residues L7–G10, K21, Q72, G77–T78, Y99–D101, G136, E151, N166, and N224 each bind UDP-N-acetyl-alpha-D-glucosamine. Residue D101 participates in Mg(2+) binding. N224 lines the Mg(2+) pocket. A linker region spans residues Q227–A247. An N-acetyltransferase region spans residues G248 to S453. Positions 330 and 348 each coordinate UDP-N-acetyl-alpha-D-glucosamine. The active-site Proton acceptor is the H360. Residues Y363 and N374 each coordinate UDP-N-acetyl-alpha-D-glucosamine. Residues A377, N383–Y384, S402, A420, and R437 each bind acetyl-CoA.

This sequence in the N-terminal section; belongs to the N-acetylglucosamine-1-phosphate uridyltransferase family. It in the C-terminal section; belongs to the transferase hexapeptide repeat family. In terms of assembly, homotrimer. The cofactor is Mg(2+).

It localises to the cytoplasm. The enzyme catalyses alpha-D-glucosamine 1-phosphate + acetyl-CoA = N-acetyl-alpha-D-glucosamine 1-phosphate + CoA + H(+). It carries out the reaction N-acetyl-alpha-D-glucosamine 1-phosphate + UTP + H(+) = UDP-N-acetyl-alpha-D-glucosamine + diphosphate. Its pathway is nucleotide-sugar biosynthesis; UDP-N-acetyl-alpha-D-glucosamine biosynthesis; N-acetyl-alpha-D-glucosamine 1-phosphate from alpha-D-glucosamine 6-phosphate (route II): step 2/2. It functions in the pathway nucleotide-sugar biosynthesis; UDP-N-acetyl-alpha-D-glucosamine biosynthesis; UDP-N-acetyl-alpha-D-glucosamine from N-acetyl-alpha-D-glucosamine 1-phosphate: step 1/1. The protein operates within bacterial outer membrane biogenesis; LPS lipid A biosynthesis. In terms of biological role, catalyzes the last two sequential reactions in the de novo biosynthetic pathway for UDP-N-acetylglucosamine (UDP-GlcNAc). The C-terminal domain catalyzes the transfer of acetyl group from acetyl coenzyme A to glucosamine-1-phosphate (GlcN-1-P) to produce N-acetylglucosamine-1-phosphate (GlcNAc-1-P), which is converted into UDP-GlcNAc by the transfer of uridine 5-monophosphate (from uridine 5-triphosphate), a reaction catalyzed by the N-terminal domain. The protein is Bifunctional protein GlmU of Cellvibrio japonicus (strain Ueda107) (Pseudomonas fluorescens subsp. cellulosa).